Reading from the N-terminus, the 1135-residue chain is MRILKLLELVVKVSLFTIALSSVLLAFLIFRATDAKVEIIRGDHPEVYDDSAENEVPTAASIQRKAILETLTNLMLESQTPGTRQIREEESTIPIFAESTTQKIISVSDLPNNCLNASSLKCEIKGISTYNVYYQVENNDVIYSCVSDSAEGLEKCDNSLNLPKRFSKVPVIPITKLDNKRHFSVGTKFFISESLTQDNYPITYNSYPTNGTVSLQTVKLSGDCKITKSNFANPYTVSITSPEKIMGYLIKKPGENVEHKVISFSGSASITFTEEMLDGEHNLLCGDKSAKIPKTNKRVRDCIIKYSKSIYKQTACINFSWIRLILIALLIYFPIRWLVNKTTKPLFLWYDLIGLITYPILLLINCLWKYFPFKCSNRGNLCIITHKCTKLCICNKSKASKEHSLECPILSKETDHGYNKHKWTSMEWFHLIVNTKLSFSLLKFVTEILIGLIILSQMPMSMAQTTQCLSGCFYVPGCPFLVTSKFEKCPERDQCYCNVKEDKIIESIFGTNIIIEGPNDCIENQNCAANPSIDNLIKCRLGCEYLDLFRNKPLYNGFSDYTGSSLGLTSIGLYEAKRLRNGIIDSYNRTDKISGMIAGDSLNKNETSIPENILPRQSLIFDSVVDGKYRYMIEQSLLGGGGTIFMLNDKTSETAKKFVIYIKSVGIHYEVSEKYTTAPIQSTHTDFYSTCTGNCDTCRKNQALTGFQDFCITPTSYWGCEEAWCFAINEGATCGFCRNIYDMDKSYRIYSVLKSTIVADVCISGILGGQCSRITEEVPYENALFQADIQADLHNDGITIGELIAHGPDSHIYSGNIANLNDPVKMFGHPQLTRDGVPIFTKKTLEGDDMSWDCAAIGKKSITIKTCGYDTYRFRSGLEQISDIPVSFKDFSSFFLEKAFSLGKLKIVVDLPSDLFKVAPKKPSITSTSLNCNGCLLCGQGLSCILEFFSDLTFSTAISIDACSLSTYQLAVKKGSNKYNITMFCSANPDKKKMTLYPEGNPDISVEVLVNNVIVEEPENIIDQNDEYAHEEQQYNSDSSAWGFWDYIKSPFNFIASYFGSFFDTIRVILLIAFIFLVIYFCSILTTICKGYVKNESYKSRSKIEDDDDSEIKAPMLMKDTMTRRRPPMDFSHLV.

The N-terminal stretch at 1–35 is a signal peptide; it reads MRILKLLELVVKVSLFTIALSSVLLAFLIFRATDA. Residues 36–314 are Lumenal-facing; sequence KVEIIRGDHP…KYSKSIYKQT (279 aa). The Cell attachment site motif lies at 41–43; that stretch reads RGD. 2 disulfides stabilise this stretch: Cys-114-Cys-145 and Cys-122-Cys-156. Asn-116 carries an N-linked (GlcNAc...) asparagine; by host glycan. Positions 177–195 are non-covalent dimerization; it reads LDNKRHFSVGTKFFISESL. An N-linked (GlcNAc...) asparagine; by host glycan is attached at Asn-210. Residues Cys-224 and Cys-285 are joined by a disulfide bond. The helical transmembrane segment at 315–366 threads the bilayer; that stretch reads ACINFSWIRLILIALLIYFPIRWLVNKTTKPLFLWYDLIGLITYPILLLINC. The Cytoplasmic portion of the chain corresponds to 367-484; sequence LWKYFPFKCS…VPGCPFLVTS (118 aa). Residues 437–484 are signal for signal peptide peptidase; it reads LSFSLLKFVTEILIGLIILSQMPMSMAQTTQCLSGCFYVPGCPFLVTS. Over 485–1067 the chain is Lumenal; the sequence is KFEKCPERDQ…YFGSFFDTIR (583 aa). Asn-588, Asn-605, and Asn-980 each carry an N-linked (GlcNAc...) asparagine; by host glycan. Residues 1068-1088 form a helical membrane-spanning segment; sequence VILLIAFIFLVIYFCSILTTI. Residues 1089-1135 are Cytoplasmic-facing; sequence CKGYVKNESYKSRSKIEDDDDSEIKAPMLMKDTMTRRRPPMDFSHLV.

Belongs to the tospovirus envelope glycoprotein family. Homodimer; disulfide-linked. Heterodimer with Glycoprotein C. Interacts with nucleoprotein. As to quaternary structure, heterodimer with Glycoprotein N. Interacts with nucleoprotein. Specific enzymatic cleavages in vivo yield mature proteins including Glycoprotein N and Glycoprotein C. Post-translationally, glycosylated with O-linked glycans. Glycosylation is essential for proper subcellular location. In terms of processing, cleaved at acidic pH.

It localises to the virion membrane. The protein resides in the host Golgi apparatus membrane. The protein localises to the host endoplasmic reticulum membrane. In terms of biological role, forms the spikes present at the surface of the virion together with Glycoprotein C. They are able to attach the virion to a cell receptor and to promote fusion of membranes after endocytosis of the virion. Plays a role in virus binding and/or entry into the vector midgut. Forms the spikes present at the surface of the virion together with Glycoprotein N. They are able to attach the virion to a cell receptor and to promote fusion of membranes after endocytosis of the virion. Probable class II fusion protein. This chain is Envelopment polyprotein (GP), found in Tomato spotted wilt virus (strain Regular2A) (TSWV).